Reading from the N-terminus, the 207-residue chain is Urease accessory protein UreG (207 aa).

Position 14–21 (14–21) interacts with GTP; it reads GPVGSGKT.

It belongs to the SIMIBI class G3E GTPase family. UreG subfamily. In terms of assembly, homodimer. UreD, UreF and UreG form a complex that acts as a GTP-hydrolysis-dependent molecular chaperone, activating the urease apoprotein by helping to assemble the nickel containing metallocenter of UreC. The UreE protein probably delivers the nickel.

It localises to the cytoplasm. Functionally, facilitates the functional incorporation of the urease nickel metallocenter. This process requires GTP hydrolysis, probably effectuated by UreG. This is Urease accessory protein UreG from Pseudomonas entomophila (strain L48).